The sequence spans 663 residues: UvrABC system protein B (663 aa).

Residues 31-418 form the Helicase ATP-binding domain; sequence DNIEGGEKAQ…TDTVVEQIIR (388 aa). 44-51 serves as a coordination point for ATP; that stretch reads GATGTGKT. The Beta-hairpin signature appears at 97–120; the sequence is YYDYYQPEAYVPSSDTYIEKDSSV. The Helicase C-terminal domain maps to 435–601; the sequence is QMDDLLGEIN…TIKKEIRDLI (167 aa). The 36-residue stretch at 627 to 662 folds into the UVR domain; that stretch reads QAEIKALQKQMQEAAELLDFELAAQIRDVILKLKAI.

Belongs to the UvrB family. In terms of assembly, forms a heterotetramer with UvrA during the search for lesions. Interacts with UvrC in an incision complex.

Its subcellular location is the cytoplasm. The UvrABC repair system catalyzes the recognition and processing of DNA lesions. A damage recognition complex composed of 2 UvrA and 2 UvrB subunits scans DNA for abnormalities. Upon binding of the UvrA(2)B(2) complex to a putative damaged site, the DNA wraps around one UvrB monomer. DNA wrap is dependent on ATP binding by UvrB and probably causes local melting of the DNA helix, facilitating insertion of UvrB beta-hairpin between the DNA strands. Then UvrB probes one DNA strand for the presence of a lesion. If a lesion is found the UvrA subunits dissociate and the UvrB-DNA preincision complex is formed. This complex is subsequently bound by UvrC and the second UvrB is released. If no lesion is found, the DNA wraps around the other UvrB subunit that will check the other stand for damage. The chain is UvrABC system protein B from Streptococcus agalactiae serotype Ia (strain ATCC 27591 / A909 / CDC SS700).